The chain runs to 158 residues: Mitotic-spindle organizing protein 2A (158 aa).

A Phosphoserine modification is found at Ser34. Residues 84–158 are disordered; it reads RLASEPQDPA…PGKSPTQGST (75 aa). The span at 112 to 122 shows a compositional bias: low complexity; the sequence is SAALGGVLALA. Residues 128-140 show a composition bias toward polar residues; sequence EGSSQRMPRQPSA. Ser152 carries the post-translational modification Phosphoserine.

It belongs to the MOZART2 family. As to quaternary structure, associates with the gamma-tubulin ring complex (gTuRC) consisting of TUBGCP2, TUBGCP3, TUBGCP4, TUBGCP5 and TUBGCP6 and gamma-tubulin TUBG1 or TUBG2; within the complex, interacts with TUBGCP2; the interaction plays a role in gTuRC activation.

It localises to the cytoplasm. Its subcellular location is the cytoskeleton. It is found in the microtubule organizing center. The protein localises to the centrosome. The protein resides in the spindle. Its function is as follows. Required for the recruitment and the assembly of the gamma-tubulin ring complex (gTuRC) at the centrosome. The gTuRC regulates the minus-end nucleation of alpha-beta tubulin heterodimers that grow into microtubule protafilaments, a critical step in centrosome duplication and spindle formation. In Homo sapiens (Human), this protein is Mitotic-spindle organizing protein 2A (MZT2A).